The sequence spans 418 residues: Putative competence-damage inducible protein (418 aa).

This sequence belongs to the CinA family.

This is Putative competence-damage inducible protein from Streptococcus pneumoniae serotype 2 (strain D39 / NCTC 7466).